The following is a 73-amino-acid chain: Pelophylaxin-1 (73 aa).

The signal sequence occupies residues 1 to 22 (MFTMKKSLLLVFFLGTIALSLC). Positions 23–41 (EEERGADDDNGGEITDEEI) are excised as a propeptide. A disulfide bridge connects residues Cys67 and Cys73.

Expressed by the skin glands.

The protein resides in the secreted. Functionally, antimicrobial peptide. The sequence is that of Pelophylaxin-1 from Pelophylax fukienensis (Fukien gold-striped pond frog).